Consider the following 576-residue polypeptide: Sulfite reductase [NADPH] hemoprotein beta-component (576 aa).

Positions 1-12 are enriched in basic and acidic residues; it reads MDAKTQPDRSRD. Residues 1–26 are disordered; that stretch reads MDAKTQPDRSRDVSQPLDKLGPDETL. 4 residues coordinate [4Fe-4S] cluster: C441, C447, C486, and C490. C490 contacts siroheme.

The protein belongs to the nitrite and sulfite reductase 4Fe-4S domain family. In terms of assembly, alpha(8)-beta(8). The alpha component is a flavoprotein, the beta component is a hemoprotein. The cofactor is siroheme. It depends on [4Fe-4S] cluster as a cofactor.

It catalyses the reaction hydrogen sulfide + 3 NADP(+) + 3 H2O = sulfite + 3 NADPH + 4 H(+). Its pathway is sulfur metabolism; hydrogen sulfide biosynthesis; hydrogen sulfide from sulfite (NADPH route): step 1/1. Component of the sulfite reductase complex that catalyzes the 6-electron reduction of sulfite to sulfide. This is one of several activities required for the biosynthesis of L-cysteine from sulfate. This Nitrobacter winogradskyi (strain ATCC 25391 / DSM 10237 / CIP 104748 / NCIMB 11846 / Nb-255) protein is Sulfite reductase [NADPH] hemoprotein beta-component.